A 104-amino-acid polypeptide reads, in one-letter code: Large ribosomal subunit protein bL21 (104 aa).

It belongs to the bacterial ribosomal protein bL21 family. Part of the 50S ribosomal subunit. Contacts protein L20.

This protein binds to 23S rRNA in the presence of protein L20. The protein is Large ribosomal subunit protein bL21 of Alkalilimnicola ehrlichii (strain ATCC BAA-1101 / DSM 17681 / MLHE-1).